The primary structure comprises 352 residues: C-C chemokine receptor type 5 (352 aa).

Residues 1 to 30 (MDYQVSSPTYDIDYYTSEPCQKVNVKQIAA) are Extracellular-facing. Tyr-3 bears the Sulfotyrosine mark. Residues Ser-6 and Ser-7 are each glycosylated (O-linked (GalNAc...) serine). Tyr-10, Tyr-14, and Tyr-15 each carry sulfotyrosine. Disulfide bonds link Cys-20–Cys-269 and Cys-101–Cys-178. A helical membrane pass occupies residues 31 to 58 (RLLPPLYSLVFIFGFVGNILVVLILINC). Residues 59-68 (KRLKSMTDIY) lie on the Cytoplasmic side of the membrane. A helical membrane pass occupies residues 69–89 (LLNLAISDLFFLLTVPFWAHY). Topologically, residues 90–102 (AAAQWDFGNTMCQ) are extracellular. A helical membrane pass occupies residues 103–124 (LLTGLYFIGFFSGIFFIILLTI). The Cytoplasmic segment spans residues 125 to 141 (DRYLAIVHAVFALKART). Residues 142–166 (VTFGVVTSVITWVVAVFASLPGIIF) form a helical membrane-spanning segment. Topologically, residues 167–198 (TRSQREGLHYTCSSHFPYSQYQFWKNFQTLKI) are extracellular. Residues 199–218 (VILGLVLPLLVMVICYSGIL) form a helical membrane-spanning segment. Residues 219–235 (KTLLRCRNEKKRHRAVR) lie on the Cytoplasmic side of the membrane. A helical transmembrane segment spans residues 236 to 260 (LIFTIMIVYFLFWAPYNIVLLLNTF). The Extracellular portion of the chain corresponds to 261 to 277 (QEFFGLNNCSSSNRLDQ). Residues 278–301 (AMQVTETLGMTHCCINPIIYAFVG) form a helical membrane-spanning segment. Topologically, residues 302 to 352 (EKFRNYLLVFFQKHIAKRFCKCCSIFQQEAPERASSVYTRSTGEQEISVGL) are cytoplasmic. S-palmitoyl cysteine attachment occurs at residues Cys-321, Cys-323, and Cys-324. Phosphoserine; by BARK1 occurs at positions 336, 337, 342, and 349.

The protein belongs to the G-protein coupled receptor 1 family. Interacts with PRAF2. Efficient ligand binding to CCL3/MIP-1alpha and CCL4/MIP-1beta requires sulfation, O-glycosylation and sialic acid modifications. Glycosylation on Ser-6 is required for efficient binding of CCL4. Interacts with GRK2. Interacts with ARRB1 and ARRB2. Interacts with CNIH4. Interacts with S100A4; this interaction stimulates T-lymphocyte chemotaxis. Sulfated on at least 2 of the N-terminal tyrosines. Sulfation is required for efficient binding of the chemokines, CCL3 and CCL4. Post-translationally, palmitoylation in the C-terminal is important for cell surface expression. In terms of processing, phosphorylation on serine residues in the C-terminal is stimulated by binding CC chemokines especially by APO-RANTES. O-glycosylated, but not N-glycosylated. Ser-6 appears to be the major site even if Ser-7 may be also O-glycosylated. Also sialylated glycans present which contribute to chemokine binding. Thr-16 and Ser-17 may also be glycosylated and, if so, with small moieties such as a T-antigen.

The protein localises to the cell membrane. Functionally, receptor for a number of inflammatory CC-chemokines including CCL3/MIP-1-alpha, CCL4/MIP-1-beta and RANTES and subsequently transduces a signal by increasing the intracellular calcium ion level. May play a role in the control of granulocytic lineage proliferation or differentiation. Participates in T-lymphocyte migration to the infection site by acting as a chemotactic receptor. The chain is C-C chemokine receptor type 5 (CCR5) from Semnopithecus entellus (Northern plains gray langur).